The following is a 414-amino-acid chain: Esterase FrsA (414 aa).

Belongs to the FrsA family.

The catalysed reaction is a carboxylic ester + H2O = an alcohol + a carboxylate + H(+). Functionally, catalyzes the hydrolysis of esters. This Escherichia coli O81 (strain ED1a) protein is Esterase FrsA.